The sequence spans 298 residues: Serpentine receptor class delta-34 (298 aa).

Transmembrane regions (helical) follow at residues 10-30 (SSIM…FTQV), 54-74 (ACFF…FAIP), 99-119 (MILL…VITY), 158-178 (LATN…IVFI), 207-227 (LTIQ…AHLI), and 242-262 (VLYM…IVTI).

Belongs to the nematode receptor-like protein srd family.

Its subcellular location is the membrane. The sequence is that of Serpentine receptor class delta-34 (srd-34) from Caenorhabditis elegans.